A 459-amino-acid polypeptide reads, in one-letter code: MLKIFNTLTREKEEFKPINQNQVGMYVCGVTVYDLCHFGHGRTFVSFDVITRYLRFLGYNLRYVRNITDVDDKIIKRALENNETCDQLVERMIAEMHKDFDALNILRPDAEPRATKHIPEIIAMVDALLQRGHAYLAADGDVMFDVESFQKYGALSRQNLEQLQAGARVEIKSVKKNPMDFVLWKMSKPNEPSWDSPWGKGRPGWHIECSAMNSKELGNHFDIHGGGSDLMFPHHENEIAQSCCAHDGEYVNYWLHTGMLTINEEKMSKSLNNFFTIRDILTKYDAESVRYFFLTAQYRSLLDYSEENIGLARKALERLYTALRGCDWNSELPAQDQYVGAFKDAMDDDFNTPGALAVLFELAREINKLKAENPAQANHLAARLKHLAGVLGLLEQDPEAFLQGGAENEEVGKIEALIKQRNDARAEKNWAAADAARDALKEMGVVLEDGANGTSWRKL.

Position 28 (cysteine 28) interacts with Zn(2+). The 'HIGH' region signature appears at valine 30–histidine 40. Zn(2+) is bound by residues cysteine 209, histidine 234, and glutamate 238. The 'KMSKS' region signature appears at lysine 266 to serine 270. Position 269 (lysine 269) interacts with ATP.

This sequence belongs to the class-I aminoacyl-tRNA synthetase family. As to quaternary structure, monomer. Zn(2+) serves as cofactor.

It is found in the cytoplasm. It carries out the reaction tRNA(Cys) + L-cysteine + ATP = L-cysteinyl-tRNA(Cys) + AMP + diphosphate. This chain is Cysteine--tRNA ligase, found in Actinobacillus succinogenes (strain ATCC 55618 / DSM 22257 / CCUG 43843 / 130Z).